The following is a 97-amino-acid chain: Large ribosomal subunit protein uL23 (97 aa).

The protein belongs to the universal ribosomal protein uL23 family. As to quaternary structure, part of the 50S ribosomal subunit. Contacts protein L29, and trigger factor when it is bound to the ribosome.

Functionally, one of the early assembly proteins it binds 23S rRNA. One of the proteins that surrounds the polypeptide exit tunnel on the outside of the ribosome. Forms the main docking site for trigger factor binding to the ribosome. This is Large ribosomal subunit protein uL23 from Brucella canis (strain ATCC 23365 / NCTC 10854 / RM-666).